Reading from the N-terminus, the 119-residue chain is Neuropeptide B (119 aa).

A signal peptide spans 1-21 (MVRCRTLVAAALALLLTPALA). Positions 53 to 119 (SESPALRVGT…SLHKAECQSA (67 aa)) are excised as a propeptide.

This sequence belongs to the neuropeptide B/W family. In terms of tissue distribution, detected in a variety of tissues. High levels are found in the lymphoid organs, central nervous system, mammary gland and uterus.

The protein localises to the secreted. In terms of biological role, may be involved in the regulation of feeding, neuroendocrine system, memory and learning. May be involved in the afferent pain pathway. In Rattus norvegicus (Rat), this protein is Neuropeptide B (Npb).